A 302-amino-acid chain; its full sequence is Dihydroorotate dehydrogenase B (NAD(+)), catalytic subunit (302 aa).

Residues serine 20 and 44-45 (KG) contribute to the FMN site. Residues lysine 44 and 68–72 (NSVGL) contribute to the substrate site. Asparagine 98 and asparagine 125 together coordinate FMN. A substrate-binding site is contributed by asparagine 125. Residue cysteine 128 is the Nucleophile of the active site. FMN-binding residues include lysine 163 and isoleucine 189. Position 190–191 (190–191 (NT)) interacts with substrate. Residues glycine 215, 241–242 (GG), and 263–264 (GT) each bind FMN.

Belongs to the dihydroorotate dehydrogenase family. Type 1 subfamily. Heterotetramer of 2 PyrK and 2 PyrD type B subunits. FMN serves as cofactor.

Its subcellular location is the cytoplasm. It catalyses the reaction (S)-dihydroorotate + NAD(+) = orotate + NADH + H(+). It functions in the pathway pyrimidine metabolism; UMP biosynthesis via de novo pathway; orotate from (S)-dihydroorotate (NAD(+) route): step 1/1. Functionally, catalyzes the conversion of dihydroorotate to orotate with NAD(+) as electron acceptor. This Thermoanaerobacter pseudethanolicus (strain ATCC 33223 / 39E) (Clostridium thermohydrosulfuricum) protein is Dihydroorotate dehydrogenase B (NAD(+)), catalytic subunit (pyrD).